We begin with the raw amino-acid sequence, 349 residues long: Autophagy-related protein 3 (349 aa).

The interval 95 to 173 (ALVNDGDDFK…IRDSGADSKN (79 aa)) is flexible region. Catalysis depends on Cys244, which acts as the Glycyl thioester intermediate. A handle region region spans residues 248–325 (SVMKTLLDRA…DQEVAIRVDQ (78 aa)). An ATG8 interaction motif (AIM) motif is present at residues 306 to 309 (WEEV).

It belongs to the ATG3 family. In terms of assembly, monomer. Interacts with ATG8 through an intermediate thioester bond between Cys-244 and the C-terminal Gly of ATG8. Interacts with the C-terminal region of the E1-like ATG7 enzyme. Also interacts with the ATG12-ATG5 conjugate.

It localises to the cytoplasm. Its function is as follows. E2 conjugating enzyme required for the cytoplasm to vacuole transport (Cvt) and autophagy. Required for selective autophagic degradation of the nucleus (nucleophagy) as well as for mitophagy which contributes to regulate mitochondrial quantity and quality by eliminating the mitochondria to a basal level to fulfill cellular energy requirements and preventing excess ROS production. Responsible for the E2-like covalent binding of phosphatidylethanolamine to the C-terminal Gly of ATG8. The ATG12-ATG5 conjugate plays a role of an E3 and promotes the transfer of ATG8 from ATG3 to phosphatidylethanolamine (PE). This step is required for the membrane association of ATG8. The formation of the ATG8-phosphatidylethanolamine conjugate is essential for autophagy and for the cytoplasm to vacuole transport (Cvt). The ATG8-PE conjugate mediates tethering between adjacent membranes and stimulates membrane hemifusion, leading to expansion of the autophagosomal membrane during autophagy. Autophagy is required for proper vegetative growth, asexual/sexual reproduction, and full virulence. Autophagy is particularly involved in the biosynthesis of deoxynivalenol (DON), an important virulence determinant. In Gibberella zeae (strain ATCC MYA-4620 / CBS 123657 / FGSC 9075 / NRRL 31084 / PH-1) (Wheat head blight fungus), this protein is Autophagy-related protein 3.